Consider the following 140-residue polypeptide: uncharacterized protein (140 aa).

This sequence belongs to the MG439/MG440 family.

This is an uncharacterized protein from Mycoplasma pneumoniae (strain ATCC 29342 / M129 / Subtype 1) (Mycoplasmoides pneumoniae).